The chain runs to 915 residues: MLEEEYTLDYFRSEGFERKVCKSCGAAFWTRDPEQEFCGDAPCVTYNFIGNPVFKPHNVSEMREAFLSFFERHGHTRLERYPVAARWRDDIYLTIASIADFQPFVTSGVVPPPANPLTISQPCIRLNDLDSVGRSGRHLTLFEMMAHHAFNTPEEQIYWKDQTVALCDEFIKSIGGDPARVSYKEHPWYGGGNAGASVEVLIGGLEVATLVFMNLGRQKTDQPPVDVNGVPYYPMRLNIVDTGYGLERLVWASKGSPTIYDAVFPEMVSRLMRSARLEDLLDNPEFTKIMGLSARFAGVMDISGTNLYNLRRKVAEAIDVPVERLERIVVPIEKVYSIADHTRCLAYMLGDCIVPSNVREGYLARLVLRRTLRMMNDLSMDDALTDLIEAQMQVVGAENFEQDVDAVREIVENEEARYASTLERGARIVQKIARNYRAKSSRVPLEEVITLYDSHGIPPEMVKEVAAAEGAVVEIPDNFYSLIAETHSEAQKEARGEDPLDAYRERAVSLPPTKKLYYELPNEVEFEAMVLDYFDGMAVLDQTLFYPEGGGQPSDTGTLVTSESMVRVEEVVKLGEVILHRVTGGPLMRGDRVKGMVDEERRWSLMRHHTATHVLLHAAQQVLGVHVHQAGAQKGSEVSRLDIRHYRHITPDELRRIELEANRLVMADTPVYIHVEERTKAEQKYGFGLYQGGVPPGREIRTVQVGADVQACAGTHVRTTGEIGPIRVLGVEHIQDGVERLVFAAGIAAVHAVQHLGDLLQESADMVSVQPENLPATVARFFSEWKEQKKEIERLQKKVVDLEMQNLDGEVVDGVRVVVRTLDATHKELVALATTVADEGGVALFASSDGTVKVVATSGAPTVNAVDIVREVCGILGGKGGGKPNLAQGAGPDASRLEEALEYGRNRIIEALHGE.

His-609, His-613, Cys-712, and His-716 together coordinate Zn(2+).

Belongs to the class-II aminoacyl-tRNA synthetase family. Zn(2+) is required as a cofactor.

The protein localises to the cytoplasm. It catalyses the reaction tRNA(Ala) + L-alanine + ATP = L-alanyl-tRNA(Ala) + AMP + diphosphate. In terms of biological role, catalyzes the attachment of alanine to tRNA(Ala) in a two-step reaction: alanine is first activated by ATP to form Ala-AMP and then transferred to the acceptor end of tRNA(Ala). Also edits incorrectly charged Ser-tRNA(Ala) and Gly-tRNA(Ala) via its editing domain. This Methanoculleus marisnigri (strain ATCC 35101 / DSM 1498 / JR1) protein is Alanine--tRNA ligase.